The sequence spans 397 residues: Cercosporin biosynthesis regulatory protein CTB8 (397 aa).

A DNA-binding region (zn(2)-C6 fungal-type) is located at residues 26–53 (CTHCSSQKIRCTKERPACARCVNKGLLC). Disordered regions lie at residues 63–90 (TRRH…APDS) and 173–198 (AEAS…ATTH). The span at 74–87 (PETTISNAPTSSVA) shows a compositional bias: polar residues. The span at 179–197 (PSSSSSPPSQRSDGGRATT) shows a compositional bias: low complexity.

It localises to the nucleus. Transcription regulator of the gene cluster that mediates the biosynthesis of cercosporin, a light-activated, non-host-selective toxin. The perylenequinone chromophore of cercosporin absorbs light energy to attain an electronically-activated triplet state and produces active oxygen species such as the hydroxyl radical, superoxide, hydrogen peroxide or singlet oxygen upon reaction with oxygen molecules. These reactive oxygen species cause damage to various cellular components including lipids, proteins and nucleic acids. In Cercospora beticola (Sugarbeet leaf spot fungus), this protein is Cercosporin biosynthesis regulatory protein CTB8.